We begin with the raw amino-acid sequence, 113 residues long: Integration host factor subunit alpha (113 aa).

The protein belongs to the bacterial histone-like protein family. Heterodimer of an alpha and a beta chain.

In terms of biological role, this protein is one of the two subunits of integration host factor, a specific DNA-binding protein that functions in genetic recombination as well as in transcriptional and translational control. The polypeptide is Integration host factor subunit alpha (Rhodopseudomonas palustris (strain BisA53)).